Reading from the N-terminus, the 173-residue chain is Small ribosomal subunit protein uS5 (173 aa).

The 64-residue stretch at 17-80 folds into the S5 DRBM domain; that stretch reads WQERVIQIRR…ADGKKQLIDV (64 aa).

It belongs to the universal ribosomal protein uS5 family. In terms of assembly, part of the 30S ribosomal subunit. Contacts proteins S4 and S8.

Functionally, with S4 and S12 plays an important role in translational accuracy. In terms of biological role, located at the back of the 30S subunit body where it stabilizes the conformation of the head with respect to the body. This is Small ribosomal subunit protein uS5 from Rippkaea orientalis (strain PCC 8801 / RF-1) (Cyanothece sp. (strain PCC 8801)).